Here is a 155-residue protein sequence, read N- to C-terminus: 6,7-dimethyl-8-ribityllumazine synthase (155 aa).

Residues F23, 57–59 (AFE), and 81–83 (AVI) each bind 5-amino-6-(D-ribitylamino)uracil. (2S)-2-hydroxy-3-oxobutyl phosphate is bound at residue 86 to 87 (ST). H89 serves as the catalytic Proton donor. 5-amino-6-(D-ribitylamino)uracil is bound at residue F114. R128 lines the (2S)-2-hydroxy-3-oxobutyl phosphate pocket.

It belongs to the DMRL synthase family.

It carries out the reaction (2S)-2-hydroxy-3-oxobutyl phosphate + 5-amino-6-(D-ribitylamino)uracil = 6,7-dimethyl-8-(1-D-ribityl)lumazine + phosphate + 2 H2O + H(+). It functions in the pathway cofactor biosynthesis; riboflavin biosynthesis; riboflavin from 2-hydroxy-3-oxobutyl phosphate and 5-amino-6-(D-ribitylamino)uracil: step 1/2. In terms of biological role, catalyzes the formation of 6,7-dimethyl-8-ribityllumazine by condensation of 5-amino-6-(D-ribitylamino)uracil with 3,4-dihydroxy-2-butanone 4-phosphate. This is the penultimate step in the biosynthesis of riboflavin. This Geobacter sp. (strain M21) protein is 6,7-dimethyl-8-ribityllumazine synthase.